Reading from the N-terminus, the 228-residue chain is Probable septum site-determining protein MinC (228 aa).

It belongs to the MinC family. Interacts with MinD and FtsZ.

In terms of biological role, cell division inhibitor that blocks the formation of polar Z ring septums. Rapidly oscillates between the poles of the cell to destabilize FtsZ filaments that have formed before they mature into polar Z rings. Prevents FtsZ polymerization. This Symbiobacterium thermophilum (strain DSM 24528 / JCM 14929 / IAM 14863 / T) protein is Probable septum site-determining protein MinC.